Consider the following 304-residue polypeptide: N-acetyl-D-glucosamine kinase (304 aa).

ATP contacts are provided by residues Gly-4–Lys-11 and Gly-133–Leu-140. His-157, Cys-178, Cys-180, and Cys-185 together coordinate Zn(2+).

This sequence belongs to the ROK (NagC/XylR) family. NagK subfamily.

It catalyses the reaction N-acetyl-D-glucosamine + ATP = N-acetyl-D-glucosamine 6-phosphate + ADP + H(+). The protein operates within cell wall biogenesis; peptidoglycan recycling. Its function is as follows. Catalyzes the phosphorylation of N-acetyl-D-glucosamine (GlcNAc) derived from cell-wall degradation, yielding GlcNAc-6-P. The polypeptide is N-acetyl-D-glucosamine kinase (Haemophilus influenzae (strain 86-028NP)).